Consider the following 346-residue polypeptide: NADH-ubiquinone oxidoreductase chain 2 (346 aa).

Transmembrane regions (helical) follow at residues 25 to 45 (HWVL…PLIS), 60 to 80 (FLTQ…NAWA), 95 to 115 (CLLL…HFWF), 124 to 144 (LMTA…LLLM), 149 to 169 (LNPA…GWMG), 178 to 195 (ILAF…IILV), 200 to 219 (LALL…FMAL), 247 to 267 (VLLS…WLII), 274 to 294 (EMTP…FFYL), and 326 to 346 (AILA…HAIV).

It belongs to the complex I subunit 2 family.

It localises to the mitochondrion inner membrane. The catalysed reaction is a ubiquinone + NADH + 5 H(+)(in) = a ubiquinol + NAD(+) + 4 H(+)(out). In terms of biological role, core subunit of the mitochondrial membrane respiratory chain NADH dehydrogenase (Complex I) that is believed to belong to the minimal assembly required for catalysis. Complex I functions in the transfer of electrons from NADH to the respiratory chain. The immediate electron acceptor for the enzyme is believed to be ubiquinone. This Anas capensis (Cape teal) protein is NADH-ubiquinone oxidoreductase chain 2 (MT-ND2).